The following is a 472-amino-acid chain: MTRRGKIVCTLGPATQRDDLVRALVEAGMDVARMNFSHGDYDDHKVAYERVRVASDATGRAVGVLADLQGPKIRLGRFASGATHWAEGETVRITVGACEGSHDRVSTTYKRLAQDAVAGDRVLVDDGKVALVVDAVEGDDVVCTVVEGGPVSDNKGISLPGMNVTAPALSEKDIEDLTFALNLGVDMVALSFVRSPADVELVHEVMDRIGRRVPVIAKLEKPEAIDNLEAIVLAFDAVMVARGDLGVELPLEEVPLVQKRAIQMARENAKPVIVATQMLDSMIENSRPTRAEASDVANAVLDGADALMLSGETSVGKYPLAAVRTMSRIICAVEENSTAAPPLTHIPRTKRGVISYAARDIGERLDAKALVAFTQSGDTVRRLARLHTPLPLLAFTAWPEVRSQLAMTWGTETFIVPKMQSTDGMIRQVDKSLLELARYKRGDLVVIVAGAPPGTVGSTNLIHVHRIGEDDV.

Position 33 (Arg33) interacts with substrate. Residues Asn35, Ser37, and Asp67 each coordinate K(+). An ATP-binding site is contributed by 35–38; it reads NFSH. ATP contacts are provided by Arg74 and Lys155. A Mg(2+)-binding site is contributed by Glu220. Substrate contacts are provided by Gly243, Asp244, and Thr276. Position 244 (Asp244) interacts with Mg(2+).

Belongs to the pyruvate kinase family. In terms of assembly, homotetramer. Requires Mg(2+) as cofactor. K(+) is required as a cofactor.

The enzyme catalyses pyruvate + ATP = phosphoenolpyruvate + ADP + H(+). It participates in carbohydrate degradation; glycolysis; pyruvate from D-glyceraldehyde 3-phosphate: step 5/5. This Mycobacterium tuberculosis (strain CDC 1551 / Oshkosh) protein is Pyruvate kinase (pyk).